The sequence spans 546 residues: CTP synthase (546 aa).

The interval 1 to 265 is amidoligase domain; sequence MTKYIFVTGG…DDIIAEQLQL (265 aa). Ser-13 contributes to the CTP binding site. Ser-13 is a binding site for UTP. ATP-binding positions include 14–19 and Asp-71; that span reads SLGKGI. Mg(2+)-binding residues include Asp-71 and Glu-139. CTP-binding positions include 146-148, 186-191, and Lys-222; these read DIE and KTKPTQ. UTP-binding positions include 186–191 and Lys-222; that span reads KTKPTQ. A Glutamine amidotransferase type-1 domain is found at 290–542; sequence KIAMVGKYVD…VKAALAHQAD (253 aa). Gly-351 provides a ligand contact to L-glutamine. The active-site Nucleophile; for glutamine hydrolysis is the Cys-378. L-glutamine is bound by residues 379 to 382, Glu-402, and Arg-469; that span reads LGMQ. Residues His-515 and Glu-517 contribute to the active site.

Belongs to the CTP synthase family. As to quaternary structure, homotetramer.

It carries out the reaction UTP + L-glutamine + ATP + H2O = CTP + L-glutamate + ADP + phosphate + 2 H(+). The catalysed reaction is L-glutamine + H2O = L-glutamate + NH4(+). The enzyme catalyses UTP + NH4(+) + ATP = CTP + ADP + phosphate + 2 H(+). The protein operates within pyrimidine metabolism; CTP biosynthesis via de novo pathway; CTP from UDP: step 2/2. With respect to regulation, allosterically activated by GTP, when glutamine is the substrate; GTP has no effect on the reaction when ammonia is the substrate. The allosteric effector GTP functions by stabilizing the protein conformation that binds the tetrahedral intermediate(s) formed during glutamine hydrolysis. Inhibited by the product CTP, via allosteric rather than competitive inhibition. In terms of biological role, catalyzes the ATP-dependent amination of UTP to CTP with either L-glutamine or ammonia as the source of nitrogen. Regulates intracellular CTP levels through interactions with the four ribonucleotide triphosphates. The sequence is that of CTP synthase from Chromobacterium violaceum (strain ATCC 12472 / DSM 30191 / JCM 1249 / CCUG 213 / NBRC 12614 / NCIMB 9131 / NCTC 9757 / MK).